We begin with the raw amino-acid sequence, 250 residues long: Probable aquaporin TIP-type (250 aa).

2 consecutive transmembrane segments (helical) span residues 22-42 and 56-76; these read AGLAEFISTFIFVFAGSGSGI and AGLISASIAHAFALFVAVSVG. The short motif at 85–87 is the NPA 1 element; the sequence is NPA. The next 3 helical transmembrane spans lie at 104 to 124, 138 to 158, and 170 to 190; these read IVYIIAQLLGSIVASALLVFV, VGVGPALVLEIVMTFGLVYTV, and IGIIAPIAIGFIVGANILVGG. Residues 198-200 carry the NPA 2 motif; the sequence is NPA. Residues 218–238 traverse the membrane as a helical segment; sequence YWAGPLIGGGIAGLVYEVLFI.

Belongs to the MIP/aquaporin (TC 1.A.8) family. TIP (TC 1.A.8.10) subfamily.

It localises to the membrane. In terms of biological role, aquaporins facilitate the transport of water and small neutral solutes across cell membranes. May have a role in buffering osmotic fluctations in the highly compartmented vacuole of arbuscule cells. This Medicago truncatula (Barrel medic) protein is Probable aquaporin TIP-type (AQP1).